The primary structure comprises 313 residues: Putative glycosyltransferase ORF313 (313 aa).

The protein belongs to the glycosyltransferase group 1 family. Glycosyltransferase 4 subfamily.

This chain is Putative glycosyltransferase ORF313, found in Acidianus hospitalis (AFV-1).